Reading from the N-terminus, the 246-residue chain is Mast cell protease 9 (246 aa).

The first 18 residues, 1–18 (MQALLFLMALLLPSRAGA), serve as a signal peptide directing secretion. A propeptide spans 19-20 (EE) (activation peptide). The region spanning 21 to 244 (IIGGVESEPH…HVPWINRVIK (224 aa)) is the Peptidase S1 domain. Cysteines 50 and 66 form a disulfide. Catalysis depends on charge relay system residues His65 and Asp109. Disulfide bonds link Cys143/Cys208 and Cys174/Cys187. Residue Ser202 is the Charge relay system of the active site.

The protein belongs to the peptidase S1 family. Granzyme subfamily. Selectively expressed in uterine mast cells.

This chain is Mast cell protease 9 (Mcpt9), found in Mus musculus (Mouse).